The chain runs to 146 residues: Leptin (146 aa).

Cysteine 96 and cysteine 146 are joined by a disulfide.

Belongs to the leptin family.

The protein localises to the secreted. Key player in the regulation of energy balance and body weight control. Once released into the circulation, has central and peripheral effects by binding LEPR, found in many tissues, which results in the activation of several major signaling pathways. In the hypothalamus, acts as an appetite-regulating factor that induces a decrease in food intake and an increase in energy consumption by inducing anorexinogenic factors and suppressing orexigenic neuropeptides, also regulates bone mass and secretion of hypothalamo-pituitary-adrenal hormones. In the periphery, increases basal metabolism, influences reproductive function, regulates pancreatic beta-cell function and insulin secretion, is pro-angiogenic for endothelial cell and affects innate and adaptive immunity. In the arcuate nucleus of the hypothalamus, activates by depolarization POMC neurons inducing FOS and SOCS3 expression to release anorexigenic peptides and inhibits by hyperpolarization NPY neurons inducing SOCS3 with a consequent reduction on release of orexigenic peptides. In addition to its known satiety inducing effect, has a modulatory role in nutrient absorption. In the intestine, reduces glucose absorption by enterocytes by activating PKC and leading to a sequential activation of p38, PI3K and ERK signaling pathways which exerts an inhibitory effect on glucose absorption. Acts as a growth factor on certain tissues, through the activation of different signaling pathways increases expression of genes involved in cell cycle regulation such as CCND1, via JAK2-STAT3 pathway, or VEGFA, via MAPK1/3 and PI3K-AKT1 pathways. May also play an apoptotic role via JAK2-STAT3 pathway and up-regulation of BIRC5 expression. Pro-angiogenic, has mitogenic activity on vascular endothelial cells and plays a role in matrix remodeling by regulating the expression of matrix metalloproteinases (MMPs) and tissue inhibitors of metalloproteinases (TIMPs). In innate immunity, modulates the activity and function of neutrophils by increasing chemotaxis and the secretion of oxygen radicals. Increases phagocytosis by macrophages and enhances secretion of pro-inflammatory mediators. Increases cytotoxic ability of NK cells. Plays a pro-inflammatory role, in synergy with IL1B, by inducing NOS2 which promotes the production of IL6, IL8 and Prostaglandin E2, through a signaling pathway that involves JAK2, PI3K, MAP2K1/MEK1 and MAPK14/p38. In adaptive immunity, promotes the switch of memory T-cells towards T helper-1 cell immune responses. Increases CD4(+)CD25(-) T-cell proliferation and reduces autophagy during TCR (T-cell receptor) stimulation, through MTOR signaling pathway activation and BCL2 up-regulation. The chain is Leptin (LEP) from Pan troglodytes (Chimpanzee).